Here is a 199-residue protein sequence, read N- to C-terminus: Guanylate kinase (199 aa).

The Guanylate kinase-like domain occupies 19–198 (VTVAVVSGPT…AVAHLVELLS (180 aa)). 26 to 33 (GPTAVGKG) contributes to the ATP binding site.

Belongs to the guanylate kinase family.

The protein resides in the cytoplasm. The enzyme catalyses GMP + ATP = GDP + ADP. Its function is as follows. Essential for recycling GMP and indirectly, cGMP. The chain is Guanylate kinase from Cutibacterium acnes (strain DSM 16379 / KPA171202) (Propionibacterium acnes).